The primary structure comprises 114 residues: Ribosome-binding factor A (114 aa).

Belongs to the RbfA family. As to quaternary structure, monomer. Binds 30S ribosomal subunits, but not 50S ribosomal subunits or 70S ribosomes.

The protein localises to the cytoplasm. In terms of biological role, one of several proteins that assist in the late maturation steps of the functional core of the 30S ribosomal subunit. Associates with free 30S ribosomal subunits (but not with 30S subunits that are part of 70S ribosomes or polysomes). Required for efficient processing of 16S rRNA. May interact with the 5'-terminal helix region of 16S rRNA. The protein is Ribosome-binding factor A of Phytoplasma mali (strain AT).